We begin with the raw amino-acid sequence, 85 residues long: Exodeoxyribonuclease 7 small subunit (85 aa).

The segment at 66–85 (SGEGEEVPLDTPDAEDGDGE) is disordered. The segment covering 68–85 (EGEEVPLDTPDAEDGDGE) has biased composition (acidic residues).

This sequence belongs to the XseB family. As to quaternary structure, heterooligomer composed of large and small subunits.

It is found in the cytoplasm. The catalysed reaction is Exonucleolytic cleavage in either 5'- to 3'- or 3'- to 5'-direction to yield nucleoside 5'-phosphates.. Functionally, bidirectionally degrades single-stranded DNA into large acid-insoluble oligonucleotides, which are then degraded further into small acid-soluble oligonucleotides. In Thioalkalivibrio sulfidiphilus (strain HL-EbGR7), this protein is Exodeoxyribonuclease 7 small subunit.